The chain runs to 351 residues: DNA polymerase IV (351 aa).

Residues 4-184 (FIHIDMDCFY…LPLGKIPGVG (181 aa)) enclose the UmuC domain. Mg(2+) contacts are provided by Asp-8 and Asp-102. Glu-103 is a catalytic residue.

The protein belongs to the DNA polymerase type-Y family. As to quaternary structure, monomer. Requires Mg(2+) as cofactor.

It is found in the cytoplasm. The catalysed reaction is DNA(n) + a 2'-deoxyribonucleoside 5'-triphosphate = DNA(n+1) + diphosphate. Its function is as follows. Poorly processive, error-prone DNA polymerase involved in untargeted mutagenesis. Copies undamaged DNA at stalled replication forks, which arise in vivo from mismatched or misaligned primer ends. These misaligned primers can be extended by PolIV. Exhibits no 3'-5' exonuclease (proofreading) activity. May be involved in translesional synthesis, in conjunction with the beta clamp from PolIII. This chain is DNA polymerase IV, found in Pseudoalteromonas translucida (strain TAC 125).